The sequence spans 594 residues: APOBEC1 complementation factor (594 aa).

RRM domains lie at C56–D134, C136–P218, and K231–P303. The required for nuclear localization stretch occupies residues H359–R408. T498 is modified (phosphothreonine).

In terms of assembly, part of the apolipoprotein B mRNA editing complex with APOBEC1. Interacts with TNPO2; TNPO2 may be responsible for transport of A1CF into the nucleus. Interacts with SYNCRIP. Interacts with CELF2/CUGBP2. Interacts with RBM47. Isoforms 1 and 2 are widely expressed while isoforms 3 and 4 are restricted to liver and small intestine.

Its subcellular location is the nucleus. The protein resides in the endoplasmic reticulum. It localises to the cytoplasm. Functionally, essential component of the apolipoprotein B mRNA editing enzyme complex which is responsible for the postranscriptional editing of a CAA codon for Gln to a UAA codon for stop in APOB mRNA. Binds to APOB mRNA and is probably responsible for docking the catalytic subunit, APOBEC1, to the mRNA to allow it to deaminate its target cytosine. The complex also seems to protect the edited APOB mRNA from nonsense-mediated decay. The protein is APOBEC1 complementation factor (A1cf) of Rattus norvegicus (Rat).